Here is a 486-residue protein sequence, read N- to C-terminus: Glutamyl-tRNA(Gln) amidotransferase subunit A (486 aa).

Catalysis depends on charge relay system residues K76 and S151. S175 functions as the Acyl-ester intermediate in the catalytic mechanism.

Belongs to the amidase family. GatA subfamily. As to quaternary structure, heterotrimer of A, B and C subunits.

It catalyses the reaction L-glutamyl-tRNA(Gln) + L-glutamine + ATP + H2O = L-glutaminyl-tRNA(Gln) + L-glutamate + ADP + phosphate + H(+). Allows the formation of correctly charged Gln-tRNA(Gln) through the transamidation of misacylated Glu-tRNA(Gln) in organisms which lack glutaminyl-tRNA synthetase. The reaction takes place in the presence of glutamine and ATP through an activated gamma-phospho-Glu-tRNA(Gln). In Chromohalobacter salexigens (strain ATCC BAA-138 / DSM 3043 / CIP 106854 / NCIMB 13768 / 1H11), this protein is Glutamyl-tRNA(Gln) amidotransferase subunit A.